Reading from the N-terminus, the 508-residue chain is Nucleolar complex protein 4 homolog (508 aa).

Helical transmembrane passes span 288-308 (VAYG…FILI), 341-361 (HLAD…AAFI), and 367-387 (LALT…CNLF).

It belongs to the CBF/MAK21 family.

Its subcellular location is the nucleus membrane. It is found in the nucleus. It localises to the nucleolus. In Gallus gallus (Chicken), this protein is Nucleolar complex protein 4 homolog (NOC4L).